A 192-amino-acid polypeptide reads, in one-letter code: dTTP/UTP pyrophosphatase (192 aa).

Asp75 acts as the Proton acceptor in catalysis.

The protein belongs to the Maf family. YhdE subfamily. Requires a divalent metal cation as cofactor.

It localises to the cytoplasm. It carries out the reaction dTTP + H2O = dTMP + diphosphate + H(+). It catalyses the reaction UTP + H2O = UMP + diphosphate + H(+). Its function is as follows. Nucleoside triphosphate pyrophosphatase that hydrolyzes dTTP and UTP. May have a dual role in cell division arrest and in preventing the incorporation of modified nucleotides into cellular nucleic acids. The sequence is that of dTTP/UTP pyrophosphatase from Pelodictyon phaeoclathratiforme (strain DSM 5477 / BU-1).